Reading from the N-terminus, the 132-residue chain is UPF0299 membrane protein YohJ (132 aa).

4 helical membrane-spanning segments follow: residues 7 to 27, 31 to 51, 63 to 83, and 93 to 113; these read IIWQYLRAFVLIYACLYAGIF, LLPVTIPGSIIGMLILFVLLA, GCYVLIRYMALLFVPIGVGVM, and FGPVVVSCAISTLVVFLVMSW.

It belongs to the UPF0299 family.

The protein localises to the cell inner membrane. This Shigella dysenteriae serotype 1 (strain Sd197) protein is UPF0299 membrane protein YohJ.